A 315-amino-acid polypeptide reads, in one-letter code: Porphobilinogen deaminase (315 aa).

Position 251 is an S-(dipyrrolylmethanemethyl)cysteine (cysteine 251).

Belongs to the HMBS family. As to quaternary structure, monomer. It depends on dipyrromethane as a cofactor.

It catalyses the reaction 4 porphobilinogen + H2O = hydroxymethylbilane + 4 NH4(+). It participates in porphyrin-containing compound metabolism; protoporphyrin-IX biosynthesis; coproporphyrinogen-III from 5-aminolevulinate: step 2/4. Functionally, tetrapolymerization of the monopyrrole PBG into the hydroxymethylbilane pre-uroporphyrinogen in several discrete steps. This Sphingopyxis alaskensis (strain DSM 13593 / LMG 18877 / RB2256) (Sphingomonas alaskensis) protein is Porphobilinogen deaminase.